Consider the following 216-residue polypeptide: Pentapeptide repeat protein VPA0095 (216 aa).

It belongs to the pentapeptide repeat protein family.

Has no effect when overexpressed in E.coli. When Cys-115 is mutated to Tyr and overexpressed it increases (fluoro)quinolone resistance in E.coli up to 16-fold for ciprofloxacin, levofloxacin and nalidixic acid. The protein is Pentapeptide repeat protein VPA0095 of Vibrio parahaemolyticus serotype O3:K6 (strain RIMD 2210633).